The following is a 189-amino-acid chain: Elongation factor P (189 aa).

It belongs to the elongation factor P family.

It localises to the cytoplasm. It functions in the pathway protein biosynthesis; polypeptide chain elongation. Its function is as follows. Involved in peptide bond synthesis. Stimulates efficient translation and peptide-bond synthesis on native or reconstituted 70S ribosomes in vitro. Probably functions indirectly by altering the affinity of the ribosome for aminoacyl-tRNA, thus increasing their reactivity as acceptors for peptidyl transferase. The polypeptide is Elongation factor P (Orientia tsutsugamushi (strain Boryong) (Rickettsia tsutsugamushi)).